Consider the following 91-residue polypeptide: MSHTHRDQKKLLARVRRIKGQAEALERALESGGECSAVLQQIAAVRGAVNGLMAQVLEGHVREHLAAADATPQQREQDIEQLMTVLRSYMK.

This sequence belongs to the FrmR/RcnR family.

The protein resides in the cytoplasm. This is an uncharacterized protein from Serratia marcescens.